The sequence spans 171 residues: 3-hydroxydecanoyl-[acyl-carrier-protein] dehydratase (171 aa).

His-70 is a catalytic residue.

The protein belongs to the thioester dehydratase family. FabA subfamily. As to quaternary structure, homodimer.

The protein localises to the cytoplasm. The catalysed reaction is a (3R)-hydroxyacyl-[ACP] = a (2E)-enoyl-[ACP] + H2O. The enzyme catalyses (3R)-hydroxydecanoyl-[ACP] = (2E)-decenoyl-[ACP] + H2O. It carries out the reaction (2E)-decenoyl-[ACP] = (3Z)-decenoyl-[ACP]. It participates in lipid metabolism; fatty acid biosynthesis. In terms of biological role, necessary for the introduction of cis unsaturation into fatty acids. Catalyzes the dehydration of (3R)-3-hydroxydecanoyl-ACP to E-(2)-decenoyl-ACP and then its isomerization to Z-(3)-decenoyl-ACP. Can catalyze the dehydratase reaction for beta-hydroxyacyl-ACPs with saturated chain lengths up to 16:0, being most active on intermediate chain length. The protein is 3-hydroxydecanoyl-[acyl-carrier-protein] dehydratase of Nitrosococcus oceani (strain ATCC 19707 / BCRC 17464 / JCM 30415 / NCIMB 11848 / C-107).